The following is a 246-amino-acid chain: Small ribosomal subunit protein uS2 (246 aa).

Belongs to the universal ribosomal protein uS2 family.

This Exiguobacterium sp. (strain ATCC BAA-1283 / AT1b) protein is Small ribosomal subunit protein uS2.